We begin with the raw amino-acid sequence, 212 residues long: Riboflavin synthase (212 aa).

2 Lumazine-binding repeats span residues 1–97 (MFTG…VGGH) and 98–195 (LVSG…VDSV). Residues 4 to 6 (GIV), 48 to 50 (CLT), 62 to 67 (DIVEET), 101 to 103 (GHI), Lys-137, 146 to 148 (SLT), and 160 to 165 (FLIPET) each bind 2,4-dihydroxypteridine.

In terms of assembly, homotrimer.

The catalysed reaction is 2 6,7-dimethyl-8-(1-D-ribityl)lumazine + H(+) = 5-amino-6-(D-ribitylamino)uracil + riboflavin. The protein operates within cofactor biosynthesis; riboflavin biosynthesis; riboflavin from 2-hydroxy-3-oxobutyl phosphate and 5-amino-6-(D-ribitylamino)uracil: step 2/2. Its function is as follows. Catalyzes the dismutation of two molecules of 6,7-dimethyl-8-ribityllumazine, resulting in the formation of riboflavin and 5-amino-6-(D-ribitylamino)uracil. The polypeptide is Riboflavin synthase (ribE) (Buchnera aphidicola subsp. Baizongia pistaciae (strain Bp)).